A 297-amino-acid polypeptide reads, in one-letter code: MTDPLERSGLVVVDKPAGMTSHDVVGKLRRFFRTRKVGHAGTLDPMATGVLVVGIERGTKFLAHMVASTKAYDATIRLGTATHTDDAEGEATWGEPATAVEDSAIAREIAALTGDIMQRPAAVSAIKVDGKRAHERVRAGEEVELPARPVTVSRFDILATRREGEFIDLDVSVACSSGTYIRSLARDLGEALGVGGHLTALRRTEVGPFRLDDAHPLDALEDSPELSLSLDEALARSYPVLEVTDEEAQALAMGKWLEPRGLKGTYAAVDPQGRSIALIQEKGKRLATVFVARPSTL.

Asp-44 (nucleophile) is an active-site residue.

This sequence belongs to the pseudouridine synthase TruB family. Type 1 subfamily.

The catalysed reaction is uridine(55) in tRNA = pseudouridine(55) in tRNA. Responsible for synthesis of pseudouridine from uracil-55 in the psi GC loop of transfer RNAs. The chain is tRNA pseudouridine synthase B from Corynebacterium aurimucosum (strain ATCC 700975 / DSM 44827 / CIP 107346 / CN-1) (Corynebacterium nigricans).